Reading from the N-terminus, the 422-residue chain is MLKAVILIGGPQKGTRFRPLSFEVPKPLFPVAGVPMLQHHIEACSKLPNMKEILLIGFYQPNEELNRFLSCAQQDFKISIRYLQEYAALGTGGGIYHFRDQILSGGPDAFFVMNADVCSEFPLPEMLDFQKEHGDTYSFVILGTTANRKQSLNYGCIVENEQTDEVLHYVEKPGTFVSDIINCGIYLFTPEIFQHIGSVFQKNQQEMLLEEQSNGWHRAEVIRLEQDIFTALAGQGKLYVYKTDRFWSQIKSAGSAIYASRLYLNQYHKTHPERLATNTEGGAKTRGNVYIHPTANIDPTAVLGPNVSIGTGVTIGAGVRVRESIILHGATLQDHSCVLNSIVGWESTIGKWARVEGTPSDPNPNDPYAKIDSETLFRDGKLTPSITILGCNVNIPSEVIILNSIVLPHKDLNRSFKNQIIL.

The substrate-binding domain stretch occupies residues 2–253 (LKAVILIGGP…DRFWSQIKSA (252 aa)). Positions 85 and 249 each coordinate GDP-alpha-D-mannose. Residues 275 to 422 (LATNTEGGAK…NRSFKNQIIL (148 aa)) form a hexapeptide repeat domain region. Positions 358–386 (TPSDPNPNDPYAKIDSETLFRDGKLTPSI) are C-loop.

Belongs to the transferase hexapeptide repeat family. As to quaternary structure, component of the GMPPA-GMPPB mannose-1-phosphate guanylyltransferase complex composed of 4 gmppa subunits and 8 gmppb subunits; the complex is organized into three layers, a central layer made up of 2 gmppa dimers sandwiched between two layers each made up of 2 gmppb dimers.

It participates in nucleotide-sugar biosynthesis; GDP-alpha-D-mannose biosynthesis; GDP-alpha-D-mannose from alpha-D-mannose 1-phosphate (GTP route): step 1/1. In terms of biological role, regulatory subunit of the GMPPA-GMPPB mannose-1-phosphate guanylyltransferase complex; reduces the catalytic activity of GMPPB when part of the complex. Mediates allosteric feedback inhibition of GMPPB catalytic activity upon binding GDP-alpha-D-mannose. Together with GMPPB regulates GDP-alpha-D-mannose levels. One of two paralogs (gmppaa and gmppab) that may have redundant functions. This chain is Mannose-1-phosphate guanylyltransferase regulatory subunit alpha-A (gmppaa), found in Danio rerio (Zebrafish).